Consider the following 107-residue polypeptide: Endonuclease ALBA3 (107 aa).

Residues Lys-23 and Lys-32 each carry the N6-acetyllysine modification.

It belongs to the histone-like Alba family. Homodimer. Interacts (acetylated and unacetylated) with Sir2A. A divalent metal cation serves as cofactor. Post-translationally, acetylated. Exists in both acetylated and unacetylated forms but predominantly in an acetylated form. Deacetylated by Sir2A.

It is found in the nucleus. It localises to the chromosome. The protein localises to the telomere. The protein resides in the cytoplasm. With respect to regulation, mild acetylation lowers protein interaction with DNA and high acetylation abolishes DNA-binding activity. DNA binding and endonuclease activity is modulated via deacetylation of Lys-23 by Sir2A. Inhibited in the presence of EDTA and EGTA. Its function is as follows. Possesses DNA-binding and endonuclease activities. Binds DNA cooperatively in sequence-independent manner at the DNA minor groove. Exhibits apurinic/apyrimidinic site-driven endonuclease activity. Binds RNA; shows high affinity for poly(A) and a lower affinity for poly(U) templates. In vitro, prevents transcription after DNA binding. Associates with the telomeric region, the subtelomeric TARE6 repeat sequence and the var gene promoters. The polypeptide is Endonuclease ALBA3 (Plasmodium falciparum (isolate 3D7)).